A 523-amino-acid chain; its full sequence is MSRQFTCKSGAAAKGGFSGCSAVLSGGSSSSFRAGSKGLSGGFGSRSLYSLGGVRSLNVASGSGKSGGYGFGRGRASGFAGSMFGSVALGPVCPTVCPPGGIHQVTVNESLLAPLNVELDPEIQKVRAQEREQIKALNNKFASFIDKVRFLEQQNQVLETKWELLQQLDLNNCKNNLEPILEGYISNLRKQLETLSGDRVRLDSELRNVRDVVEDYKKRYEEEINKRTAAENEFVLLKKDVDAAYANKVELQAKVESMDQEIKFFRCLFEAEITQIQSHISDMSVILSMDNNRNLDLDSIIDEVRTQYEEIALKSKAEAEALYQTKFQELQLAAGRHGDDLKNTKNEISELTRLIQRIRSEIENVKKQASNLETAIADAEQRGDNALKDARAKLDELEGALHQAKEELARMLREYQELMSLKLALDMEIATYRKLLESEECRMSGEFPSPVSISIISSTSGGSVYGFRPSMVSGGYVANSSNCISGVCSVRGGEGRSRGSANDYKDTLGKGSSLSAPSKKTSR.

A head region spans residues methionine 1 to glutamine 129. The segment at glutamate 130–leucine 165 is coil 1A. Residues glutamate 130–methionine 443 form the IF rod domain. Residues glutamine 166–tyrosine 184 are linker 1. The coil 1B stretch occupies residues isoleucine 185–isoleucine 276. Residues glutamine 277–isoleucine 300 form a linker 12 region. The interval isoleucine 301–glutamate 439 is coil 2. Residues glutamate 440 to arginine 523 are tail. A disordered region spans residues glycine 492–arginine 523. The span at glycine 493–leucine 508 shows a compositional bias: basic and acidic residues. The segment covering lysine 510–arginine 523 has biased composition (polar residues).

This sequence belongs to the intermediate filament family. Heterodimer of a type I and a type II keratin. Associates with KRT16 and/or KRT17. As to expression, highly expressed in hair follicles from scalp. Specifically expressed in the inner root sheath (IRS) of the hair follicle. Present in the all 3 IRS layers: the cuticle, the Henle and the Huxley layers. Also detected in the pseudopods of specialized Huxley cells, termed Fluegelzellen, along the area of differentiated Henle cells (at protein level).

It is found in the cytoplasm. It localises to the cytoskeleton. Plays a central role in hair formation. Essential component of keratin intermediate filaments in the inner root sheath (IRS) of the hair follicle. This chain is Keratin, type II cytoskeletal 71 (KRT71), found in Homo sapiens (Human).